The chain runs to 450 residues: Probable ECA polymerase (450 aa).

Transmembrane regions (helical) follow at residues 6–26 (FSGL…LTWF), 37–57 (VFFS…TSVL), 63–83 (VGVA…CFYA), 118–138 (VILM…NGFL), 155–175 (GVAL…VYFL), 181–201 (AWLF…MIVG), 207–227 (IIIA…ISLW), 228–248 (MLAA…LKRY), 341–361 (LVVM…GLII), 378–398 (YKAA…IVLA), and 410–430 (VFFI…YWLF).

It belongs to the WzyE family. As to quaternary structure, probably part of a complex composed of WzxE, WzyE and WzzE.

It localises to the cell inner membrane. It functions in the pathway bacterial outer membrane biogenesis; enterobacterial common antigen biosynthesis. In terms of biological role, probably involved in the polymerization of enterobacterial common antigen (ECA) trisaccharide repeat units. The chain is Probable ECA polymerase from Shigella flexneri.